Here is a 581-residue protein sequence, read N- to C-terminus: Phosphoglucomutase, cytoplasmic (581 aa).

The segment covering M1–T11 has biased composition (basic and acidic residues). Positions M1–T20 are disordered. Alpha-D-glucose 1,6-bisphosphate-binding residues include R24 and S123. S123 acts as the Phosphoserine intermediate in catalysis. 4 residues coordinate Mg(2+): S123, D298, D300, and D302. Residue S123 is modified to Phosphoserine. Alpha-D-glucose 1,6-bisphosphate is bound by residues D302, R303, T366, E385, S387, and K398.

This sequence belongs to the phosphohexose mutase family. Monomer. Mg(2+) serves as cofactor.

Its subcellular location is the cytoplasm. It catalyses the reaction alpha-D-glucose 1-phosphate = alpha-D-glucose 6-phosphate. It carries out the reaction O-phospho-L-seryl-[protein] + alpha-D-glucose 1-phosphate = alpha-D-glucose 1,6-bisphosphate + L-seryl-[protein]. The catalysed reaction is alpha-D-glucose 1,6-bisphosphate + L-seryl-[protein] = O-phospho-L-seryl-[protein] + alpha-D-glucose 6-phosphate. In terms of biological role, catalyzes the reversible isomerization of alpha-D-glucose 1-phosphate to alpha-D-glucose 6-phosphate. The mechanism proceeds via the intermediate compound alpha-D-glucose 1,6-bisphosphate. This enzyme participates in both the breakdown and synthesis of glucose. This chain is Phosphoglucomutase, cytoplasmic (PGM1), found in Bromus inermis (Smooth brome grass).